The sequence spans 239 residues: 1-(5-phosphoribosyl)-5-[(5-phosphoribosylamino)methylideneamino] imidazole-4-carboxamide isomerase (239 aa).

The active-site Proton acceptor is D8. The active-site Proton donor is D129.

The protein belongs to the HisA/HisF family.

It localises to the cytoplasm. It catalyses the reaction 1-(5-phospho-beta-D-ribosyl)-5-[(5-phospho-beta-D-ribosylamino)methylideneamino]imidazole-4-carboxamide = 5-[(5-phospho-1-deoxy-D-ribulos-1-ylimino)methylamino]-1-(5-phospho-beta-D-ribosyl)imidazole-4-carboxamide. It participates in amino-acid biosynthesis; L-histidine biosynthesis; L-histidine from 5-phospho-alpha-D-ribose 1-diphosphate: step 4/9. The protein is 1-(5-phosphoribosyl)-5-[(5-phosphoribosylamino)methylideneamino] imidazole-4-carboxamide isomerase of Bacillus cereus (strain G9842).